The chain runs to 511 residues: Coiled-coil domain-containing protein 125 (511 aa).

Positions 1–12 (MSKVARSSSESD) are enriched in polar residues. The tract at residues 1–110 (MSKVARSSSE…TVDSNSELSN (110 aa)) is disordered. Over residues 43-54 (EFSHRSRKRSDG) the composition is skewed to basic and acidic residues. Residues 83–108 (QDTFPQVSRISNYRRQSSTVDSNSEL) are compositionally biased toward polar residues. Coiled-coil stretches lie at residues 105–243 (NSEL…LEAL) and 293–325 (RMAA…MADA). Serine 504 is subject to Phosphoserine.

The protein resides in the cytoplasm. Its function is as follows. May be involved in the regulation of cell migration. This chain is Coiled-coil domain-containing protein 125 (CCDC125), found in Homo sapiens (Human).